Reading from the N-terminus, the 98-residue chain is MKAYDIIVSPMLTEKTNTQRESINVYVFKVNKRANKKEVGAAIKELFNVTPVSCNLLNIKSKAKVVVSRRGYPIGKGKTSSWKKAYVYLKKEDKIDIF.

The protein belongs to the universal ribosomal protein uL23 family. As to quaternary structure, part of the 50S ribosomal subunit. Contacts protein L29, and trigger factor when it is bound to the ribosome.

In terms of biological role, one of the early assembly proteins it binds 23S rRNA. One of the proteins that surrounds the polypeptide exit tunnel on the outside of the ribosome. Forms the main docking site for trigger factor binding to the ribosome. The chain is Large ribosomal subunit protein uL23 from Borrelia garinii subsp. bavariensis (strain ATCC BAA-2496 / DSM 23469 / PBi) (Borreliella bavariensis).